We begin with the raw amino-acid sequence, 460 residues long: Serine--tRNA ligase (460 aa).

A compositionally biased stretch (basic and acidic residues) spans 43–66 (AEGDGLRQERNEVSSKIGELKQDG). The interval 43–81 (AEGDGLRQERNEVSSKIGELKQDGKDEEAQEAIDRSQEL) is disordered. 242-244 (TAE) is a binding site for L-serine. ATP is bound by residues 273-275 (RRE) and V289. E296 is a binding site for L-serine. 369–372 (EVSS) contributes to the ATP binding site. Position 405 (S405) interacts with L-serine.

This sequence belongs to the class-II aminoacyl-tRNA synthetase family. Type-1 seryl-tRNA synthetase subfamily. In terms of assembly, homodimer. The tRNA molecule binds across the dimer.

It is found in the cytoplasm. It carries out the reaction tRNA(Ser) + L-serine + ATP = L-seryl-tRNA(Ser) + AMP + diphosphate + H(+). The catalysed reaction is tRNA(Sec) + L-serine + ATP = L-seryl-tRNA(Sec) + AMP + diphosphate + H(+). It participates in aminoacyl-tRNA biosynthesis; selenocysteinyl-tRNA(Sec) biosynthesis; L-seryl-tRNA(Sec) from L-serine and tRNA(Sec): step 1/1. Catalyzes the attachment of serine to tRNA(Ser). Is also probably able to aminoacylate tRNA(Sec) with serine, to form the misacylated tRNA L-seryl-tRNA(Sec), which will be further converted into selenocysteinyl-tRNA(Sec). In Haloarcula marismortui (strain ATCC 43049 / DSM 3752 / JCM 8966 / VKM B-1809) (Halobacterium marismortui), this protein is Serine--tRNA ligase (serS).